Reading from the N-terminus, the 164-residue chain is FMN reductase (NADH) RutF (164 aa).

This sequence belongs to the non-flavoprotein flavin reductase family. RutF subfamily.

The catalysed reaction is FMNH2 + NAD(+) = FMN + NADH + 2 H(+). Its function is as follows. Catalyzes the reduction of FMN to FMNH2 which is used to reduce pyrimidine by RutA via the Rut pathway. The chain is FMN reductase (NADH) RutF from Enterobacter sp. (strain 638).